A 363-amino-acid polypeptide reads, in one-letter code: Flagellar P-ring protein (363 aa).

An N-terminal signal peptide occupies residues 1–20 (MKCKLIFAVFMLAFSMPSQA).

This sequence belongs to the FlgI family. The basal body constitutes a major portion of the flagellar organelle and consists of four rings (L,P,S, and M) mounted on a central rod.

It localises to the periplasm. It is found in the bacterial flagellum basal body. In terms of biological role, assembles around the rod to form the L-ring and probably protects the motor/basal body from shearing forces during rotation. This is Flagellar P-ring protein from Shewanella oneidensis (strain ATCC 700550 / JCM 31522 / CIP 106686 / LMG 19005 / NCIMB 14063 / MR-1).